The chain runs to 277 residues: 3-methyl-2-oxobutanoate hydroxymethyltransferase (277 aa).

Residues D53 and D96 each coordinate Mg(2+). 3-methyl-2-oxobutanoate contacts are provided by residues 53-54, D96, and K126; that span reads DS. Mg(2+) is bound at residue E128. Residue E195 is the Proton acceptor of the active site.

Belongs to the PanB family. Homodecamer; pentamer of dimers. The cofactor is Mg(2+).

Its subcellular location is the cytoplasm. It catalyses the reaction 3-methyl-2-oxobutanoate + (6R)-5,10-methylene-5,6,7,8-tetrahydrofolate + H2O = 2-dehydropantoate + (6S)-5,6,7,8-tetrahydrofolate. It participates in cofactor biosynthesis; (R)-pantothenate biosynthesis; (R)-pantoate from 3-methyl-2-oxobutanoate: step 1/2. In terms of biological role, catalyzes the reversible reaction in which hydroxymethyl group from 5,10-methylenetetrahydrofolate is transferred onto alpha-ketoisovalerate to form ketopantoate. The polypeptide is 3-methyl-2-oxobutanoate hydroxymethyltransferase (Chlorobium luteolum (strain DSM 273 / BCRC 81028 / 2530) (Pelodictyon luteolum)).